A 206-amino-acid polypeptide reads, in one-letter code: MIGKLKGVLDEIGEDHCVVDVGGVGYVAHCSARSLSTLGSVGTPVTLFIETYVREDMIRLYGFRTVLEREWFRLLQNNVQGVGAKVALSVLSTLTPSELANAIALRDIATVARAPGVGRKVAERIVTELKSKAPAFAGEAAGAIGLKQDLGEGVAPAPVSDAVSALANLGYSRDIAANAVAAALKSAGEGADTGTLIRLGLKELAR.

The domain I stretch occupies residues 1 to 64 (MIGKLKGVLD…EDMIRLYGFR (64 aa)). The tract at residues 65-144 (TVLEREWFRL…AFAGEAAGAI (80 aa)) is domain II. The segment at 145–154 (GLKQDLGEGV) is flexible linker. The segment at 154–206 (VAPAPVSDAVSALANLGYSRDIAANAVAAALKSAGEGADTGTLIRLGLKELAR) is domain III.

Belongs to the RuvA family. In terms of assembly, homotetramer. Forms an RuvA(8)-RuvB(12)-Holliday junction (HJ) complex. HJ DNA is sandwiched between 2 RuvA tetramers; dsDNA enters through RuvA and exits via RuvB. An RuvB hexamer assembles on each DNA strand where it exits the tetramer. Each RuvB hexamer is contacted by two RuvA subunits (via domain III) on 2 adjacent RuvB subunits; this complex drives branch migration. In the full resolvosome a probable DNA-RuvA(4)-RuvB(12)-RuvC(2) complex forms which resolves the HJ.

It localises to the cytoplasm. The RuvA-RuvB-RuvC complex processes Holliday junction (HJ) DNA during genetic recombination and DNA repair, while the RuvA-RuvB complex plays an important role in the rescue of blocked DNA replication forks via replication fork reversal (RFR). RuvA specifically binds to HJ cruciform DNA, conferring on it an open structure. The RuvB hexamer acts as an ATP-dependent pump, pulling dsDNA into and through the RuvAB complex. HJ branch migration allows RuvC to scan DNA until it finds its consensus sequence, where it cleaves and resolves the cruciform DNA. This chain is Holliday junction branch migration complex subunit RuvA, found in Chelativorans sp. (strain BNC1).